A 266-amino-acid chain; its full sequence is Ribonuclease 3 (266 aa).

Residues 1–35 are disordered; that stretch reads MMDESADIKPVPTSEDVAAPSGTEPVAPAPKKKRA. The RNase III domain maps to 43 to 171; sequence MAAIEQRLGH…VIGAVYLDGG (129 aa). Residue glutamate 84 participates in Mg(2+) binding. Aspartate 88 is an active-site residue. Positions 157 and 160 each coordinate Mg(2+). The active site involves glutamate 160. The DRBM domain occupies 196-265; it reads DPKTVLQEWA…ASAMIVREGV (70 aa).

The protein belongs to the ribonuclease III family. In terms of assembly, homodimer. The cofactor is Mg(2+).

It localises to the cytoplasm. The catalysed reaction is Endonucleolytic cleavage to 5'-phosphomonoester.. Functionally, digests double-stranded RNA. Involved in the processing of primary rRNA transcript to yield the immediate precursors to the large and small rRNAs (23S and 16S). Processes some mRNAs, and tRNAs when they are encoded in the rRNA operon. Processes pre-crRNA and tracrRNA of type II CRISPR loci if present in the organism. The protein is Ribonuclease 3 of Nitrobacter winogradskyi (strain ATCC 25391 / DSM 10237 / CIP 104748 / NCIMB 11846 / Nb-255).